A 96-amino-acid chain; its full sequence is Large ribosomal subunit protein bL28 (96 aa).

The span at 1 to 22 (MSRSCELTGKGVQSGNNVSHAN) shows a compositional bias: polar residues. The disordered stretch occupies residues 1 to 24 (MSRSCELTGKGVQSGNNVSHANNK).

This sequence belongs to the bacterial ribosomal protein bL28 family.

This is Large ribosomal subunit protein bL28 from Sinorhizobium medicae (strain WSM419) (Ensifer medicae).